A 337-amino-acid chain; its full sequence is MTLKFVKGESDNLELAKGRAAFVLVIGNTKTANIEGITVAGANPELIKYTPPADAELLYHGKCLSIDGVPATPDGKPTPALITYTALRLTSIPLFVVNSGLMVPPKIPYIDLNAPVGENIAESRAMDREKVEEVLERAKIVGRQLSKLSDVLIIGESIPAGTTTAAAVLKALGLNAAVSSSMPENPVELKRKVVERAVERVESNDPIEVLSAVGDPVMVGVAGIALGSEKPVILAGGTQMVAIANLIARMGEVEAVIATTKYVASDATADLSLSPFPVIASDPMLGKSRYPGLRAYEEGFVKEGVGAGGMTSVAYARGITPEKFLEEVEKDYERIVL.

Belongs to the UPF0284 family.

The protein is UPF0284 protein AF_0276 of Archaeoglobus fulgidus (strain ATCC 49558 / DSM 4304 / JCM 9628 / NBRC 100126 / VC-16).